We begin with the raw amino-acid sequence, 260 residues long: Hydroxyethylthiazole kinase 1 (260 aa).

Residue Met39 participates in substrate binding. ATP-binding residues include Arg115 and Thr160. Position 187 (Gly187) interacts with substrate.

Belongs to the Thz kinase family. The cofactor is Mg(2+).

The enzyme catalyses 5-(2-hydroxyethyl)-4-methylthiazole + ATP = 4-methyl-5-(2-phosphooxyethyl)-thiazole + ADP + H(+). The protein operates within cofactor biosynthesis; thiamine diphosphate biosynthesis; 4-methyl-5-(2-phosphoethyl)-thiazole from 5-(2-hydroxyethyl)-4-methylthiazole: step 1/1. Its function is as follows. Catalyzes the phosphorylation of the hydroxyl group of 4-methyl-5-beta-hydroxyethylthiazole (THZ). The polypeptide is Hydroxyethylthiazole kinase 1 (Streptococcus pneumoniae (strain JJA)).